A 636-amino-acid polypeptide reads, in one-letter code: Chaperone protein DnaK (636 aa).

Position 203 is a phosphothreonine; by autocatalysis (Thr-203). The segment at 602 to 636 (VYGKQQEGAPAQEEPSAEGKKADDEGTVEGEFREV) is disordered. Positions 618-636 (AEGKKADDEGTVEGEFREV) are enriched in basic and acidic residues.

The protein belongs to the heat shock protein 70 family.

Functionally, acts as a chaperone. The polypeptide is Chaperone protein DnaK (Dehalococcoides mccartyi (strain ATCC BAA-2100 / JCM 16839 / KCTC 5957 / BAV1)).